Here is a 184-residue protein sequence, read N- to C-terminus: MNWRSEWLWIEPITGSRRTSNFCRACILFFGSLGFFLVGISSYLGKNLIPVLSSQQILFVPQGIVMCFYGIAGLFISSYLWCTILWNVGSGYDKFDEEEGIVCLFRWGFPGRNRRTFLRFLMKDIQAIKMEVQEGLYPRRVLYMEIKGQRDIPLARTGENLTLREMEQKAAELARFLRISIEVF.

Transmembrane regions (helical) follow at residues 25–45 (ACILFFGSLGFFLVGISSYLG) and 57–77 (ILFVPQGIVMCFYGIAGLFIS).

Belongs to the Ycf4 family.

The protein resides in the plastid. Its subcellular location is the chloroplast thylakoid membrane. Seems to be required for the assembly of the photosystem I complex. The chain is Photosystem I assembly protein Ycf4 from Cycas taitungensis (Prince sago).